Reading from the N-terminus, the 258-residue chain is Agamous-like MADS-box protein AGL3 (258 aa).

The MADS-box domain maps to 3 to 57; the sequence is RGKVELKRIENKINRQVTFAKRRNGLLKKAYELSVLCDAEIALLIFSNRGKLYEF. The K-box domain maps to 88-178; the sequence is LQDKYQDYLK…RRKLEDSDAA (91 aa). Residues 186-214 form a disordered region; the sequence is SSAAEQQQQHQQQQQGMSSYQSNPPIQEA. Positions 191–200 are enriched in low complexity; that stretch reads QQQQHQQQQQ. Positions 201 to 210 are enriched in polar residues; sequence GMSSYQSNPP.

In terms of assembly, forms homodimers. Interacts with TT16/AGL32. Expressed in aerial vegetative organs and flowers, but not in roots. Expressed in flower primordia.

The protein localises to the nucleus. Probable transcription factor that binds specifically to the CArG box DNA sequence 5'-CC (A/T)6 GG-3'. Plays an important role in the determination of flower meristem identity. Involved in the specification of sepal identity. Contributes to the development of petals, stamens and carpels. This chain is Agamous-like MADS-box protein AGL3 (AGL3), found in Arabidopsis thaliana (Mouse-ear cress).